A 476-amino-acid polypeptide reads, in one-letter code: Serine/threonine-protein kinase PknF (476 aa).

The Protein kinase domain maps to 12-279 (FTIVRQLGSG…FARALGHRLG (268 aa)). ATP-binding positions include 18–26 (LGSGGMGEV) and Lys41. Asp137 (proton acceptor) is an active-site residue. Residues 306-326 (TAVIVPAVLAMLLVMAVAVAV) traverse the membrane as a helical segment. Positions 332–376 (ADDERAAQPARTRTTTSAGTTTSVAPASTTRPAPTTPTTTGAADT) are disordered. Over residues 338-376 (AQPARTRTTTSAGTTTSVAPASTTRPAPTTPTTTGAADT) the composition is skewed to low complexity.

It belongs to the protein kinase superfamily. Ser/Thr protein kinase family. In terms of processing, autophosphorylated. Dephosphorylated by PstP.

Its subcellular location is the cell membrane. It catalyses the reaction L-seryl-[protein] + ATP = O-phospho-L-seryl-[protein] + ADP + H(+). It carries out the reaction L-threonyl-[protein] + ATP = O-phospho-L-threonyl-[protein] + ADP + H(+). Its function is as follows. A serine/threonine-protein kinase, acts on HupB in vitro. The protein is Serine/threonine-protein kinase PknF of Mycobacterium tuberculosis (strain ATCC 25177 / H37Ra).